We begin with the raw amino-acid sequence, 481 residues long: (S)-N-methylcoclaurine 3'-hydroxylase isozyme 1 (481 aa).

C423 provides a ligand contact to heme.

Belongs to the cytochrome P450 family. Heme is required as a cofactor. As to expression, restricted to the parietal region of sieve elements adjacent or proximal to laticifers in roots, stems, leaves, carpels and hypocotyls.

The protein resides in the endoplasmic reticulum. It carries out the reaction (S)-N-methylcoclaurine + reduced [NADPH--hemoprotein reductase] + O2 = (S)-3'-hydroxy-N-methylcoclaurine + oxidized [NADPH--hemoprotein reductase] + H2O + H(+). It functions in the pathway alkaloid biosynthesis; (S)-reticuline biosynthesis; (S)-reticuline from (S)-norcoclaurine: step 3/4. Functionally, cytochrome P450 monooxygenase involved in the biosynthesis of benzylisoquinoline alkaloids. Catalyzes the 3'-hydroxylation of (S)-N-methylcoclaurine. The protein is (S)-N-methylcoclaurine 3'-hydroxylase isozyme 1 of Papaver somniferum (Opium poppy).